The primary structure comprises 704 residues: Elongation factor G (704 aa).

The tr-type G domain maps to aspartate 8–valine 291. GTP contacts are provided by residues alanine 17–threonine 24, aspartate 90–histidine 94, and asparagine 144–aspartate 147.

Belongs to the TRAFAC class translation factor GTPase superfamily. Classic translation factor GTPase family. EF-G/EF-2 subfamily.

The protein resides in the cytoplasm. Functionally, catalyzes the GTP-dependent ribosomal translocation step during translation elongation. During this step, the ribosome changes from the pre-translocational (PRE) to the post-translocational (POST) state as the newly formed A-site-bound peptidyl-tRNA and P-site-bound deacylated tRNA move to the P and E sites, respectively. Catalyzes the coordinated movement of the two tRNA molecules, the mRNA and conformational changes in the ribosome. This chain is Elongation factor G, found in Chlorobaculum parvum (strain DSM 263 / NCIMB 8327) (Chlorobium vibrioforme subsp. thiosulfatophilum).